A 497-amino-acid polypeptide reads, in one-letter code: Probable pyruvate kinase, cytosolic isozyme (497 aa).

R37 is a binding site for substrate. 4 residues coordinate K(+): N39, S41, D71, and T72. Residue 39-42 (NFSH) coordinates ATP. ATP contacts are provided by R78 and K163. Residue K227 participates in substrate binding. Position 229 (E229) interacts with Mg(2+). Substrate contacts are provided by G252, D253, and T285. D253 contributes to the Mg(2+) binding site.

Belongs to the pyruvate kinase family. Homotetramer. Requires Mg(2+) as cofactor. K(+) serves as cofactor.

The protein localises to the cytoplasm. The protein resides in the cytosol. The enzyme catalyses pyruvate + ATP = phosphoenolpyruvate + ADP + H(+). Its pathway is carbohydrate degradation; glycolysis; pyruvate from D-glyceraldehyde 3-phosphate: step 5/5. Its function is as follows. Key regulatory enzyme of the glycolytic pathway that catalyzes the final step of glycolysis, converting ADP and phosphoenolpyruvate (PEP) to ATP and pyruvate by essentially irreversible transphosphorylation. The polypeptide is Probable pyruvate kinase, cytosolic isozyme (Arabidopsis thaliana (Mouse-ear cress)).